The primary structure comprises 271 residues: Formamidopyrimidine-DNA glycosylase (271 aa).

P2 serves as the catalytic Schiff-base intermediate with DNA. E3 acts as the Proton donor in catalysis. Catalysis depends on K57, which acts as the Proton donor; for beta-elimination activity. DNA is bound by residues H90, R109, and K151. Residues 236 to 270 (HVYGRGGETCTQCGHLLSEIKLGQRATVFCSLCQK) form an FPG-type zinc finger. The active-site Proton donor; for delta-elimination activity is R260.

Belongs to the FPG family. Monomer. Zn(2+) serves as cofactor.

It catalyses the reaction Hydrolysis of DNA containing ring-opened 7-methylguanine residues, releasing 2,6-diamino-4-hydroxy-5-(N-methyl)formamidopyrimidine.. It carries out the reaction 2'-deoxyribonucleotide-(2'-deoxyribose 5'-phosphate)-2'-deoxyribonucleotide-DNA = a 3'-end 2'-deoxyribonucleotide-(2,3-dehydro-2,3-deoxyribose 5'-phosphate)-DNA + a 5'-end 5'-phospho-2'-deoxyribonucleoside-DNA + H(+). Its function is as follows. Involved in base excision repair of DNA damaged by oxidation or by mutagenic agents. Acts as a DNA glycosylase that recognizes and removes damaged bases. Has a preference for oxidized purines, such as 7,8-dihydro-8-oxoguanine (8-oxoG). Has AP (apurinic/apyrimidinic) lyase activity and introduces nicks in the DNA strand. Cleaves the DNA backbone by beta-delta elimination to generate a single-strand break at the site of the removed base with both 3'- and 5'-phosphates. The chain is Formamidopyrimidine-DNA glycosylase from Shewanella halifaxensis (strain HAW-EB4).